A 345-amino-acid polypeptide reads, in one-letter code: Phosphoribosylformylglycinamidine cyclo-ligase (345 aa).

Belongs to the AIR synthase family.

The protein localises to the cytoplasm. It catalyses the reaction 2-formamido-N(1)-(5-O-phospho-beta-D-ribosyl)acetamidine + ATP = 5-amino-1-(5-phospho-beta-D-ribosyl)imidazole + ADP + phosphate + H(+). The protein operates within purine metabolism; IMP biosynthesis via de novo pathway; 5-amino-1-(5-phospho-D-ribosyl)imidazole from N(2)-formyl-N(1)-(5-phospho-D-ribosyl)glycinamide: step 2/2. The sequence is that of Phosphoribosylformylglycinamidine cyclo-ligase from Shewanella denitrificans (strain OS217 / ATCC BAA-1090 / DSM 15013).